The chain runs to 96 residues: Small ribosomal subunit protein bS6 (96 aa).

Belongs to the bacterial ribosomal protein bS6 family.

Functionally, binds together with bS18 to 16S ribosomal RNA. The protein is Small ribosomal subunit protein bS6 of Natranaerobius thermophilus (strain ATCC BAA-1301 / DSM 18059 / JW/NM-WN-LF).